The primary structure comprises 360 residues: Peptide chain release factor 1 (360 aa).

Glutamine 235 carries the post-translational modification N5-methylglutamine.

It belongs to the prokaryotic/mitochondrial release factor family. Methylated by PrmC. Methylation increases the termination efficiency of RF1.

The protein localises to the cytoplasm. Its function is as follows. Peptide chain release factor 1 directs the termination of translation in response to the peptide chain termination codons UAG and UAA. In Cupriavidus pinatubonensis (strain JMP 134 / LMG 1197) (Cupriavidus necator (strain JMP 134)), this protein is Peptide chain release factor 1.